Here is a 419-residue protein sequence, read N- to C-terminus: Prolyl hydroxylase EGLN2 (419 aa).

2 stretches are compositionally biased toward low complexity: residues 1 to 18 and 64 to 73; these read MDSP…PQLP and TTATATTTTA. 2 disordered regions span residues 1-89 and 108-181; these read MDSP…GELW and AAQG…REEV. Residues 89 to 134 carry the Bipartite nuclear localization signal motif; it reads WPLQSEGAAALVTKECQRLAAQGARPEAPKRKWAKDGGDAPSPSKR. Basic and acidic residues predominate over residues 115–126; it reads EAPKRKWAKDGG. Phosphoserine is present on S130. Over residues 154–174 the composition is skewed to low complexity; sequence SGASNSSSSSSNTTSSSGEAS. The tract at residues 237-247 is beta(2)beta(3) 'finger-like' loop; that stretch reads VSQRAIPPRSI. Residues 290–388 form the Fe2OG dioxygenase domain; the sequence is GRTKAMVACY…RYAITVWYFD (99 aa). Residues H309, D311, and H370 each contribute to the Fe cation site. R379 is a binding site for 2-oxoglutarate.

As to quaternary structure, interacts with E3 ligase SIAH2. Interacts with LIMD1, WTIP and AJUBA. It depends on Fe(2+) as a cofactor. L-ascorbate is required as a cofactor. In terms of processing, ubiquitinated by SIAH1 and/or SIAH2 in response to the unfolded protein response (UPR), leading to its degradation. Highly expressed in testis, expression was also detected in the heart brain, liver kidney and lung. Expression was lowest in spleen and skeletal muscle. Constitutively expressed during differentiation of C2C12 skeletal myocytes.

The protein localises to the nucleus. The enzyme catalyses L-prolyl-[protein] + 2-oxoglutarate + O2 = trans-4-hydroxy-L-prolyl-[protein] + succinate + CO2. The catalysed reaction is L-prolyl-[hypoxia-inducible factor alpha subunit] + 2-oxoglutarate + O2 = trans-4-hydroxy-L-prolyl-[hypoxia-inducible factor alpha subunit] + succinate + CO2. Prolyl hydroxylase that mediates hydroxylation of proline residues in target proteins, such as ATF4, IKBKB, CEP192 and HIF1A. Target proteins are preferentially recognized via a LXXLAP motif. Cellular oxygen sensor that catalyzes, under normoxic conditions, the post-translational formation of 4-hydroxyproline in hypoxia-inducible factor (HIF) alpha proteins. Hydroxylates a specific proline found in each of the oxygen-dependent degradation (ODD) domains (N-terminal, NODD, and C-terminal, CODD) of HIF1A. Also hydroxylates HIF2A. Has a preference for the CODD site for both HIF1A and HIF2A. Hydroxylated HIFs are then targeted for proteasomal degradation via the von Hippel-Lindau ubiquitination complex. Under hypoxic conditions, the hydroxylation reaction is attenuated allowing HIFs to escape degradation resulting in their translocation to the nucleus, heterodimerization with HIF1B, and increased expression of hypoxy-inducible genes. EGLN2 is involved in regulating hypoxia tolerance and apoptosis in cardiac and skeletal muscle. Also regulates susceptibility to normoxic oxidative neuronal death. Links oxygen sensing to cell cycle and primary cilia formation by hydroxylating the critical centrosome component CEP192 which promotes its ubiquitination and subsequent proteasomal degradation. Hydroxylates IKBKB, mediating NF-kappa-B activation in hypoxic conditions. Also mediates hydroxylation of ATF4, leading to decreased protein stability of ATF4. This chain is Prolyl hydroxylase EGLN2, found in Mus musculus (Mouse).